Consider the following 539-residue polypeptide: Carboxypeptidase Y homolog A (539 aa).

A signal peptide spans 1 to 17 (MKALTATLLVGTALAAV). Positions 18–122 (PPQQPIQVPT…KLEKYDLRVK (105 aa)) are excised as a propeptide. Disulfide bonds link C176/C416, C310/C324, C334/C357, C341/C350, and C379/C386. The N-linked (GlcNAc...) asparagine glycan is linked to N207. The active site involves S263. Residue D455 is part of the active site. N-linked (GlcNAc...) asparagine glycosylation occurs at N506. H517 is an active-site residue.

Belongs to the peptidase S10 family.

The protein resides in the vacuole. It catalyses the reaction Release of a C-terminal amino acid with broad specificity.. Vacuolar carboxypeptidase involved in degradation of small peptides. Digests preferentially peptides containing an aliphatic or hydrophobic residue in P1' position, as well as methionine, leucine or phenylalanine in P1 position of ester substrate. This is Carboxypeptidase Y homolog A (cpyA) from Coccidioides posadasii (strain C735) (Valley fever fungus).